A 364-amino-acid polypeptide reads, in one-letter code: Methylthioribose-1-phosphate isomerase (364 aa).

Residues 53–55 (RGA), Arg-90, and Gln-203 contribute to the substrate site. Asp-244 serves as the catalytic Proton donor. A substrate-binding site is contributed by 254–255 (NK).

The protein belongs to the eIF-2B alpha/beta/delta subunits family. MtnA subfamily.

The catalysed reaction is 5-(methylsulfanyl)-alpha-D-ribose 1-phosphate = 5-(methylsulfanyl)-D-ribulose 1-phosphate. It participates in amino-acid biosynthesis; L-methionine biosynthesis via salvage pathway; L-methionine from S-methyl-5-thio-alpha-D-ribose 1-phosphate: step 1/6. Catalyzes the interconversion of methylthioribose-1-phosphate (MTR-1-P) into methylthioribulose-1-phosphate (MTRu-1-P). The protein is Methylthioribose-1-phosphate isomerase of Brucella anthropi (strain ATCC 49188 / DSM 6882 / CCUG 24695 / JCM 21032 / LMG 3331 / NBRC 15819 / NCTC 12168 / Alc 37) (Ochrobactrum anthropi).